Consider the following 299-residue polypeptide: Transcription elongation factor A protein 2 (299 aa).

The TFIIS N-terminal domain occupies 5–82; that stretch reads EEIARIARRL…KSWKKLLDVS (78 aa). A Glycyl lysine isopeptide (Lys-Gly) (interchain with G-Cter in ubiquitin) cross-link involves residue Lys57. Phosphoserine occurs at positions 59 and 100. Positions 82 to 127 are disordered; that stretch reads SDGKSRNQGRGTPLPTSSSKDASRTTDLSCKKPDPPRTPSTPRITT. The segment covering 87 to 101 has biased composition (polar residues); that stretch reads RNQGRGTPLPTSSSK. A compositionally biased stretch (basic and acidic residues) spans 102–116; sequence DASRTTDLSCKKPDP. The region spanning 138-254 is the TFIIS central domain; it reads VRNKCREMLT…EHQMARTGGT (117 aa). The TFIIS-type zinc-finger motif lies at 257–297; it reads DLFTCNKCRKKNCTYTQVQTRSSDEPMTTYVVCNECGNRWK. Positions 261, 264, 289, and 292 each coordinate Zn(2+).

This sequence belongs to the TFS-II family. In terms of assembly, interacts with the basal transcription factor GTF2B. Interacts with REXO1. Testis and ovary specific. Specific to testicular germ cells.

It is found in the nucleus. Its function is as follows. Necessary for efficient RNA polymerase II transcription elongation past template-encoded arresting sites. The arresting sites in DNA have the property of trapping a certain fraction of elongating RNA polymerases that pass through, resulting in locked ternary complexes. Cleavage of the nascent transcript by S-II allows the resumption of elongation from the new 3'-terminus. In Mus musculus (Mouse), this protein is Transcription elongation factor A protein 2 (Tcea2).